A 220-amino-acid polypeptide reads, in one-letter code: Orotate phosphoribosyltransferase (220 aa).

A 5-phospho-alpha-D-ribose 1-diphosphate-binding site is contributed by Lys-26. Residue 34 to 35 coordinates orotate; the sequence is FF. Residues 72–73, Arg-99, Lys-100, Lys-103, His-105, and 125–133 each bind 5-phospho-alpha-D-ribose 1-diphosphate; these read YK and DDVISAGTS. Orotate-binding residues include Ser-129 and Arg-157.

Belongs to the purine/pyrimidine phosphoribosyltransferase family. PyrE subfamily. As to quaternary structure, homodimer. Mg(2+) is required as a cofactor.

The catalysed reaction is orotidine 5'-phosphate + diphosphate = orotate + 5-phospho-alpha-D-ribose 1-diphosphate. Its pathway is pyrimidine metabolism; UMP biosynthesis via de novo pathway; UMP from orotate: step 1/2. Functionally, catalyzes the transfer of a ribosyl phosphate group from 5-phosphoribose 1-diphosphate to orotate, leading to the formation of orotidine monophosphate (OMP). The sequence is that of Orotate phosphoribosyltransferase from Nitrosococcus oceani (strain ATCC 19707 / BCRC 17464 / JCM 30415 / NCIMB 11848 / C-107).